Here is a 143-residue protein sequence, read N- to C-terminus: Large ribosomal subunit protein uL11 (143 aa).

It belongs to the universal ribosomal protein uL11 family. As to quaternary structure, part of the ribosomal stalk of the 50S ribosomal subunit. Interacts with L10 and the large rRNA to form the base of the stalk. L10 forms an elongated spine to which L12 dimers bind in a sequential fashion forming a multimeric L10(L12)X complex. One or more lysine residues are methylated.

Functionally, forms part of the ribosomal stalk which helps the ribosome interact with GTP-bound translation factors. The sequence is that of Large ribosomal subunit protein uL11 from Beutenbergia cavernae (strain ATCC BAA-8 / DSM 12333 / CCUG 43141 / JCM 11478 / NBRC 16432 / NCIMB 13614 / HKI 0122).